Consider the following 305-residue polypeptide: Olfactory receptor 4F17 (305 aa).

At 1–18 the chain is on the extracellular side; the sequence is MVTEFIFLGLSDSQGLQT. A helical transmembrane segment spans residues 19–42; the sequence is FLFMLFFVFYGGIVFGNLLIVITV. Residues 43–50 are Cytoplasmic-facing; it reads VSDSHLHS. A helical transmembrane segment spans residues 51-72; sequence PMYFLLANLSLIDLSLSSVTAP. At 73–93 the chain is on the extracellular side; sequence KMITDFFSQRKVISFKGCLVQ. C90 and C182 are oxidised to a cystine. A helical transmembrane segment spans residues 94–113; it reads IFLLHFFGGSEMVILIAMGF. Over 114–132 the chain is Cytoplasmic; the sequence is DRYIAICKPLHYTTIMCGN. Residues 133-151 traverse the membrane as a helical segment; that stretch reads ACVGIMAVAWGIGFLHSVS. Residues 152–188 are Extracellular-facing; it reads QLAFAVHLPFCGPNEVDSFYCDLPRVIKLACTDTYRL. The chain crosses the membrane as a helical span at residues 189 to 212; that stretch reads DIMVIANSGVLTVCSFVLLIISYT. The Cytoplasmic portion of the chain corresponds to 213-228; sequence IILMTIQHRPLDKSSK. Residues 229-251 form a helical membrane-spanning segment; the sequence is ALSTLTAHITVVLLFFGPCVFIY. At 252 to 262 the chain is on the extracellular side; it reads AWPFPIKSLDK. Residues 263–282 form a helical membrane-spanning segment; the sequence is FLAVFYSVITPLLNPIIYTL. Over 283 to 305 the chain is Cytoplasmic; it reads RNKDMKTAIRQLRKWDAHSSVKF.

Belongs to the G-protein coupled receptor 1 family.

The protein resides in the cell membrane. Odorant receptor. The sequence is that of Olfactory receptor 4F17 (OR4F17) from Homo sapiens (Human).